Consider the following 507-residue polypeptide: RNA-splicing ligase RtcB homolog (507 aa).

Residues Asp-121, Cys-124, His-229, His-261, and His-355 each coordinate Mn(2+). 228-232 (NHYGE) provides a ligand contact to GMP. Residues 355-356 (HN), 404-407 (GGTM), Ser-411, 430-433 (HGSG), and Lys-506 each bind GMP. Residue His-430 is the GMP-histidine intermediate of the active site.

The protein belongs to the RtcB family. As to quaternary structure, catalytic component of the tRNA-splicing ligase complex. Mn(2+) is required as a cofactor.

The enzyme catalyses a 3'-end 3'-phospho-ribonucleotide-RNA + a 5'-end dephospho-ribonucleoside-RNA + GTP = a ribonucleotidyl-ribonucleotide-RNA + GMP + diphosphate. It carries out the reaction a 3'-end 2',3'-cyclophospho-ribonucleotide-RNA + a 5'-end dephospho-ribonucleoside-RNA + GTP + H2O = a ribonucleotidyl-ribonucleotide-RNA + GMP + diphosphate + H(+). Catalytic subunit of the tRNA-splicing ligase complex that acts by directly joining spliced tRNA halves to mature-sized tRNAs by incorporating the precursor-derived splice junction phosphate into the mature tRNA as a canonical 3',5'-phosphodiester. May act as an RNA ligase with broad substrate specificity, and may function toward other RNAs. This is RNA-splicing ligase RtcB homolog from Theileria parva (East coast fever infection agent).